A 505-amino-acid chain; its full sequence is ATP synthase subunit alpha (505 aa).

169-176 (GDRQTGKT) is an ATP binding site.

Belongs to the ATPase alpha/beta chains family. F-type ATPases have 2 components, CF(1) - the catalytic core - and CF(0) - the membrane proton channel. CF(1) has five subunits: alpha(3), beta(3), gamma(1), delta(1), epsilon(1). CF(0) has three main subunits: a(1), b(2) and c(9-12). The alpha and beta chains form an alternating ring which encloses part of the gamma chain. CF(1) is attached to CF(0) by a central stalk formed by the gamma and epsilon chains, while a peripheral stalk is formed by the delta and b chains.

Its subcellular location is the cell membrane. The catalysed reaction is ATP + H2O + 4 H(+)(in) = ADP + phosphate + 5 H(+)(out). Functionally, produces ATP from ADP in the presence of a proton gradient across the membrane. The alpha chain is a regulatory subunit. The sequence is that of ATP synthase subunit alpha from Clostridium acetobutylicum (strain ATCC 824 / DSM 792 / JCM 1419 / IAM 19013 / LMG 5710 / NBRC 13948 / NRRL B-527 / VKM B-1787 / 2291 / W).